The sequence spans 263 residues: S-acyl fatty acid synthase thioesterase, medium chain (263 aa).

Methionine 1 bears the N-acetylmethionine mark. Residues serine 101 and histidine 237 contribute to the active site. The segment at 262 to 263 is important for interaction with FASN; sequence LT.

This sequence belongs to the thioesterase family. As to quaternary structure, interacts (via C-terminus) with FASN.

It is found in the cytoplasm. The protein localises to the cytosol. The catalysed reaction is (9Z)-octadecenoyl-[ACP] + H2O = (9Z)-octadecenoate + holo-[ACP] + H(+). The enzyme catalyses decanoyl-CoA + H2O = decanoate + CoA + H(+). It catalyses the reaction dodecanoyl-CoA + H2O = dodecanoate + CoA + H(+). It carries out the reaction tetradecanoyl-CoA + H2O = tetradecanoate + CoA + H(+). The catalysed reaction is hexadecanoyl-CoA + H2O = hexadecanoate + CoA + H(+). Contributes to the release of free fatty acids from fatty acid synthase (FASN). Has broad substrate specificity, giving rise to a range of free fatty acids with chain lengths between 10 and 16 carbon atoms (C10 - C16). The sequence is that of S-acyl fatty acid synthase thioesterase, medium chain from Rattus norvegicus (Rat).